Here is a 199-residue protein sequence, read N- to C-terminus: MYTRPLARLIEELQRLPGIGSKTAQRLALHLLNRPAGEVEALAKALLEAKQTVKHCSICFNWSAEDPCEICRSPQRDPSTWCVVADVKDLIAMERTREFKGLYHVLGGLISPMNGIGAEQLRIRELVARVAREKPQELIFALSPSVEGEVTMHVVKDYLKPVAPGLRMTRLAFGLPMGSELEYADEVTLARALEARQEF.

The segment at 56–71 (CSICFNWSAEDPCEIC) adopts a C4-type zinc-finger fold. One can recognise a Toprim domain in the interval 79–174 (STWCVVADVK…GLRMTRLAFG (96 aa)).

It belongs to the RecR family.

Functionally, may play a role in DNA repair. It seems to be involved in an RecBC-independent recombinational process of DNA repair. It may act with RecF and RecO. This chain is Recombination protein RecR, found in Synechococcus sp. (strain JA-3-3Ab) (Cyanobacteria bacterium Yellowstone A-Prime).